The sequence spans 109 residues: FK506-binding protein (109 aa).

Positions 20–108 constitute a PPIase FKBP-type domain; it reads GKEITVHYTG…IFEVELLKVY (89 aa).

It belongs to the FKBP-type PPIase family.

It carries out the reaction [protein]-peptidylproline (omega=180) = [protein]-peptidylproline (omega=0). Its function is as follows. PPIases accelerate the folding of proteins. The sequence is that of FK506-binding protein (fbp) from Neisseria meningitidis serogroup C.